A 775-amino-acid chain; its full sequence is MKLLSLLMLAGIAQAIVPPREPRSPTGGGNKLLTYKECVPRATISPRSTSLAWINSEEDGRYISQSDDGALILQNIVTNTNKTLVAADKVPKGYYDYWFKPDLSAVLWATNYTKQYRHSYFANYFILDIKKGSLTPLAQDQAGDIQYAQWSPMNNSIAYVRXNDLYIWNNGKTKRITENGGPDIFNGVPDWVYEEEIFGDRFALWFSPDGEYLAYLRFNETGVPTYTIPYYKNKQKIAPAYPRELEIRYPKVSAKNPTVQFHLLNIASSQETTIPVTAFPENDLVIGEVAWLSSGHDSVAYRAFNRVQDREKIVSVKVESKESKVIRERDGTDGWIDNLLSMSYIGNVNGKEYYVDISDASGWAHIYLYPVDGGKEIALTKGEWEVVAILKVDTKKKLIYFTSTKYHSTTRHVYSVSYDTKVMTPLVNDKEAAYYTASFSAKGGYYILSYQGPNVPYQELYSTKDSKKPLKTITSNDALLEKLKEYKLPKVSFFEIKLPSGETLNVKQRLPPNFNPHKKYPVLFTPYGGPGAQEVSQAWNSLDFKSYITSDPELEYVTWTVDNRGTGYKGRKFRSAVAKRLGFLEAQDQVFAAKEVLKNRWADKDHIGIWGXSYGGFLTAKTLETDSGVFTFGISTAPVSDFRLYDSMYTERYMKTVELNADGYSETAVHKVDGFKNLKGHYLIQHGTGDDNVHFQNAAVLSNTLMNGGVTADKLTTQWFTDSDHGIRYDMDSTYQYKQLSKMVYDQKQRRPESPPMHQWSKRVLAALFGERAEE.

An N-terminal signal peptide occupies residues Met1 to Ala15. N-linked (GlcNAc...) asparagine glycans are attached at residues Asn81, Asn111, Asn154, and Asn219. Residues Ser613, Asp690, and His725 each act as charge relay system in the active site.

This sequence belongs to the peptidase S9B family.

Its subcellular location is the secreted. The enzyme catalyses Release of an N-terminal dipeptide, Xaa-Yaa-|-Zaa-, from a polypeptide, preferentially when Yaa is Pro, provided Zaa is neither Pro nor hydroxyproline.. Its function is as follows. Extracellular dipeptidyl-peptidase which removes N-terminal dipeptides sequentially from polypeptides having unsubstituted N-termini provided that the penultimate residue is proline. Contributes to pathogenicity. This chain is Dipeptidyl peptidase 4 (DPP4), found in Trichophyton rubrum (Athlete's foot fungus).